A 320-amino-acid polypeptide reads, in one-letter code: Glucosaminate ammonia-lyase (320 aa).

An FAD-binding site is contributed by 36–43 (TGMQAGGQ). A disulfide bridge connects residues Cys136 and Cys139. An FAD-binding site is contributed by 285–294 (DVADHVYRQA).

The protein belongs to the class-II pyridine nucleotide-disulfide oxidoreductase family.

The catalysed reaction is 2-amino-2-deoxy-D-gluconate = 2-dehydro-3-deoxy-D-gluconate + NH4(+). Its function is as follows. Catalyzes the conversion of 2-amino-2-deoxy-D-gluconate (GlcNA) to 2-keto-3-deoxy-D-gluconic acid (KDGA) and ammonia. The sequence is that of Glucosaminate ammonia-lyase from Pseudomonas fluorescens.